The sequence spans 157 residues: Transcriptional repressor NrdR (157 aa).

Residues 1–11 are compositionally biased toward polar residues; the sequence is MQCPSCQNTDS. Residues 1–21 are disordered; sequence MQCPSCQNTDSRVLESRSADT. A zinc finger lies at 3 to 34; sequence CPSCQNTDSRVLESRSADTGKSVRRRRECLNC. The region spanning 49-139 is the ATP-cone domain; the sequence is ITVIKRSESK…VYRQFNGIND (91 aa).

The protein belongs to the NrdR family. Zn(2+) serves as cofactor.

In terms of biological role, negatively regulates transcription of bacterial ribonucleotide reductase nrd genes and operons by binding to NrdR-boxes. This chain is Transcriptional repressor NrdR, found in Prochlorococcus marinus (strain MIT 9211).